Here is a 339-residue protein sequence, read N- to C-terminus: Homeobox protein Hox-D13 (339 aa).

The interval 1 to 33 is disordered; the sequence is MSRSGTWDMDGLRADGGAAGAAPASSSSSVAAP. The span at 20–33 shows a compositional bias: low complexity; it reads GAAPASSSSSVAAP. A DNA-binding region (homeobox) is located at residues 272–331; sequence GRKKRVPYTKLQLKELENEYAINKFINKDKRRRISAATNLSERQVTIWFQNRRVKDKKIV.

Belongs to the Abd-B homeobox family.

The protein localises to the nucleus. Sequence-specific transcription factor that binds gene promoters and activates their transcription. Part of a developmental regulatory system that provides cells with specific positional identities on the anterior-posterior axis. The sequence is that of Homeobox protein Hox-D13 (Hoxd13) from Mus musculus (Mouse).